Consider the following 387-residue polypeptide: 23S rRNA (uracil(747)-C(5))-methyltransferase RlmC (387 aa).

Positions 3, 11, 14, and 86 each coordinate [4Fe-4S] cluster. Positions 211, 240, 269, and 319 each coordinate S-adenosyl-L-methionine. Cys346 (nucleophile) is an active-site residue.

It belongs to the class I-like SAM-binding methyltransferase superfamily. RNA M5U methyltransferase family. RlmC subfamily.

It catalyses the reaction uridine(747) in 23S rRNA + S-adenosyl-L-methionine = 5-methyluridine(747) in 23S rRNA + S-adenosyl-L-homocysteine + H(+). Its function is as follows. Catalyzes the formation of 5-methyl-uridine at position 747 (m5U747) in 23S rRNA. The chain is 23S rRNA (uracil(747)-C(5))-methyltransferase RlmC from Pasteurella multocida (strain Pm70).